Reading from the N-terminus, the 280-residue chain is C-type lectin domain family 1 member A (280 aa).

Residues 1 to 44 (MQAKYSSTRDMLDDDGDTTMSLHSQGSATTRHPEPRRTEHRAPS) form a disordered region. At 1 to 52 (MQAKYSSTRDMLDDDGDTTMSLHSQGSATTRHPEPRRTEHRAPSSTWRPVAL) the chain is on the cytoplasmic side. The segment covering 18-30 (TTMSLHSQGSATT) has biased composition (polar residues). Over residues 31-42 (RHPEPRRTEHRA) the composition is skewed to basic and acidic residues. Residues 53 to 73 (TLLTLCLVLLIGLAALGLLFF) form a helical; Signal-anchor for type II membrane protein membrane-spanning segment. The Extracellular portion of the chain corresponds to 74–280 (QYYQLSNTGQ…VPPETLGEGD (207 aa)). 2 N-linked (GlcNAc...) asparagine glycosylation sites follow: Asn-95 and Asn-169. The region spanning 144–258 (HGDNCYQFYK…CKELKRCVCE (115 aa)) is the C-type lectin domain. 2 cysteine pairs are disulfide-bonded: Cys-165/Cys-257 and Cys-236/Cys-249.

As to expression, expressed preferentially in dendritic cells.

The protein localises to the membrane. The polypeptide is C-type lectin domain family 1 member A (CLEC1A) (Homo sapiens (Human)).